The chain runs to 298 residues: dTDP-4-dehydrorhamnose reductase (298 aa).

NADH contacts are provided by residues 10–12, 35–36, and 59–61; these read GQV, DL, and AYT. NADPH contacts are provided by residues 11 to 12, 35 to 36, 59 to 61, and Y98; these read QV, DL, and AYT. 100–101 contributes to the dTDP-beta-L-rhamnose binding site; the sequence is TD. Residues Y124 and K128 each coordinate NADH. Residues Y124 and K128 each contribute to the NADPH site. Y124 functions as the Proton donor/acceptor in the catalytic mechanism. W149 is a binding site for dTDP-beta-L-rhamnose.

Belongs to the dTDP-4-dehydrorhamnose reductase family. In terms of assembly, homodimer. Requires Mg(2+) as cofactor.

The enzyme catalyses dTDP-beta-L-rhamnose + NADP(+) = dTDP-4-dehydro-beta-L-rhamnose + NADPH + H(+). It functions in the pathway carbohydrate biosynthesis; dTDP-L-rhamnose biosynthesis. It participates in bacterial outer membrane biogenesis; LPS O-antigen biosynthesis. In terms of biological role, involved in the biosynthesis of the dTDP-L-rhamnose which is an important component of lipopolysaccharide (LPS). Catalyzes the reduction of dTDP-6-deoxy-L-lyxo-4-hexulose to yield dTDP-L-rhamnose. The protein is dTDP-4-dehydrorhamnose reductase of Burkholderia thailandensis (strain ATCC 700388 / DSM 13276 / CCUG 48851 / CIP 106301 / E264).